Consider the following 374-residue polypeptide: Putative phosphoserine aminotransferase (374 aa).

L-glutamate is bound at residue Arg-48. Residues 82–83 (AT), Phe-106, Thr-152, Asp-174, and Gln-197 each bind pyridoxal 5'-phosphate. Lys-198 carries the post-translational modification N6-(pyridoxal phosphate)lysine. Position 249-250 (249-250 (NT)) interacts with pyridoxal 5'-phosphate.

Belongs to the class-V pyridoxal-phosphate-dependent aminotransferase family. SerC subfamily. Homodimer. It depends on pyridoxal 5'-phosphate as a cofactor.

It is found in the cytoplasm. The catalysed reaction is O-phospho-L-serine + 2-oxoglutarate = 3-phosphooxypyruvate + L-glutamate. It carries out the reaction 4-(phosphooxy)-L-threonine + 2-oxoglutarate = (R)-3-hydroxy-2-oxo-4-phosphooxybutanoate + L-glutamate. It participates in amino-acid biosynthesis; L-serine biosynthesis; L-serine from 3-phospho-D-glycerate: step 2/3. Its pathway is cofactor biosynthesis; pyridoxine 5'-phosphate biosynthesis; pyridoxine 5'-phosphate from D-erythrose 4-phosphate: step 3/5. Functionally, catalyzes the reversible conversion of 3-phosphohydroxypyruvate to phosphoserine and of 3-hydroxy-2-oxo-4-phosphonooxybutanoate to phosphohydroxythreonine. The polypeptide is Putative phosphoserine aminotransferase (Mycobacterium avium (strain 104)).